A 611-amino-acid polypeptide reads, in one-letter code: RAC serine/threonine-protein kinase (611 aa).

Over residues 14-25 the composition is skewed to low complexity; the sequence is VVASAPAPGSAS. Disordered stretches follow at residues 14 to 33 and 45 to 88; these read VVAS…SPTT and QSTH…NTTF. S30 is modified (phosphoserine). Residues 106–211 form the PH domain; it reads QVVKEGWLMK…WTEAIRNVSS (106 aa). The 258-residue stretch at 266–523 folds into the Protein kinase domain; it reads FEFLKVLGKG…VKEIQAHPFF (258 aa). ATP is bound by residues 272–280 and K295; that span reads LGKGTFGKV. Residue D389 is the Proton acceptor of the active site. The 74-residue stretch at 524–597 folds into the AGC-kinase C-terminal domain; sequence ASINWTDLVL…QGDMASTLGT (74 aa). Residue S586 is modified to Phosphoserine.

The protein belongs to the protein kinase superfamily. AGC Ser/Thr protein kinase family. RAC subfamily. As to quaternary structure, interacts with trbl. Post-translationally, phosphorylated and activated by Pk61C/PDK1. Phosphorylated on Ser-586 by the TORC2 complex. As to expression, ubiquitously expressed. Present in ovary, where it is concentrated at the basal side of follicle cells.

The protein localises to the cytoplasm. It localises to the cytosol. It is found in the cell membrane. The enzyme catalyses L-seryl-[protein] + ATP = O-phospho-L-seryl-[protein] + ADP + H(+). It carries out the reaction L-threonyl-[protein] + ATP = O-phospho-L-threonyl-[protein] + ADP + H(+). In terms of biological role, serine/threonine kinase involved in various developmental processes. During early embryogenesis, acts as a survival protein. During mid-embryogenesis, phosphorylates and activates trh, a transcription factor required for tracheal cell fate determination. Also regulates tracheal cell migration. Later in development, acts downstream of PI3K and Pk61C/PDK1 in the insulin receptor transduction pathway which regulates cell growth and organ size, by phosphorylating and antagonizing FOXO transcription factor. Controls follicle cell size during oogenesis. May also stimulate cell growth by phosphorylating Gig/Tsc2 and inactivating the Tsc complex. Dephosphorylation of 'Ser-586' by Phlpp triggers apoptosis and suppression of tumor growth. This chain is RAC serine/threonine-protein kinase, found in Drosophila melanogaster (Fruit fly).